The primary structure comprises 179 residues: Coatomer subunit zeta-2 (179 aa).

Belongs to the adaptor complexes small subunit family. In terms of assembly, oligomeric complex that consists of at least the alpha, beta, beta', gamma, delta, epsilon and zeta subunits.

Its subcellular location is the cytoplasm. It is found in the golgi apparatus membrane. It localises to the cytoplasmic vesicle. The protein localises to the COPI-coated vesicle membrane. In terms of biological role, the coatomer is a cytosolic protein complex that binds to dilysine motifs and reversibly associates with Golgi non-clathrin-coated vesicles, which further mediate biosynthetic protein transport from the ER, via the Golgi up to the trans Golgi network. Coatomer complex is required for budding from Golgi membranes, and is essential for the retrograde Golgi-to-ER transport of dilysine-tagged proteins. The zeta subunit may be involved in regulating the coat assembly and, hence, the rate of biosynthetic protein transport due to its association-dissociation properties with the coatomer complex. The sequence is that of Coatomer subunit zeta-2 from Arabidopsis thaliana (Mouse-ear cress).